The sequence spans 258 residues: Sugar fermentation stimulation protein homolog (258 aa).

This sequence belongs to the SfsA family.

This chain is Sugar fermentation stimulation protein homolog, found in Marinomonas sp. (strain MWYL1).